Reading from the N-terminus, the 324-residue chain is Malate dehydrogenase (324 aa).

NAD(+) is bound by residues 10-15 (GAGAVG) and Asp34. 2 residues coordinate substrate: Arg88 and Arg94. NAD(+) is bound by residues Asn101 and 124 to 126 (VTN). Residues Asn126 and Arg157 each contribute to the substrate site. The Proton acceptor role is filled by His181.

This sequence belongs to the LDH/MDH superfamily.

The enzyme catalyses (S)-malate + NAD(+) = oxaloacetate + NADH + H(+). Catalyzes the reversible oxidation of malate to oxaloacetate. The chain is Malate dehydrogenase (mdh) from Picrophilus torridus (strain ATCC 700027 / DSM 9790 / JCM 10055 / NBRC 100828 / KAW 2/3).